The sequence spans 613 residues: YTH domain-containing family protein 2 (613 aa).

Disordered stretches follow at residues 1 to 43 (MSAS…AQPR), 215 to 234 (SQVSTAPTMPPASMAPAKTA), and 244 to 396 (AKPQ…TVPA). Positions 2 to 397 (SASSLLEQRP…GMGGITVPAE (396 aa)) are localization to mRNA processing bodies (P-bodies). A compositionally biased stretch (polar residues) spans 16-27 (NKVQNGAVTQKD). Low complexity-rich tracts occupy residues 218–234 (STAPTMPPASMAPAKTA), 295–307 (NGQPPNQSSPQPG), and 345–360 (PPQLSQGPPASQPSQP). Residues 398–613 (PHPVLEKLRM…RMQDRQGRVK (216 aa)) form an interaction with m6A-containing mRNAs region. Residues 423–557 (GRVFIIKSYS…DKARQVLKII (135 aa)) enclose the YTH domain. Residues 429–431 (KSY), aspartate 435, 445–446 (WC), asparagine 475, tryptophan 499, and tryptophan 504 contribute to the RNA site. Basic and acidic residues-rich tracts occupy residues 578–587 (EEEESVKKVE) and 604–613 (RMQDRQGRVK). Residues 578-613 (EEEESVKKVEVQGSDPYSNNSSRSHYRMQDRQGRVK) form a disordered region.

This sequence belongs to the YTHDF family. YTHDF2 subfamily.

Its subcellular location is the cytoplasm. The protein resides in the cytosol. The protein localises to the P-body. It is found in the stress granule. It localises to the nucleus. In terms of biological role, specifically recognizes and binds N6-methyladenosine (m6A)-containing RNAs, and regulates their stability. M6A is a modification present at internal sites of mRNAs and some non-coding RNAs and plays a role in mRNA stability and processing. Acts as a regulator of mRNA stability by promoting degradation of m6A-containing mRNAs. The YTHDF paralogs (ythdf1, ythdf2 and ythdf3) share m6A-containing mRNAs targets and act redundantly to mediate mRNA degradation and cellular differentiation. Plays a key role in maternal-to-zygotic transition during early embryonic development, the process during which maternally inherited mRNAs are degraded: acts by binding m6A-containing maternal mRNAs and promoting their degradation. More than one-third of maternal mRNAs can be modified by m6A. Binding to m6A-containing mRNAs results in mRNA degradation. Also involved in hematopoietic stem cells specification by binding to m6A-containing mRNAs, such as notch1a, and promote their degradation. The decreased Notch signaling following notch1a degradation promotes endothelial to hematopoietic transition. Promotes formation of phase-separated membraneless compartments, such as P-bodies or stress granules, by undergoing liquid-liquid phase separation upon binding to mRNAs containing multiple m6A-modified residues: polymethylated mRNAs act as a multivalent scaffold for the binding of YTHDF proteins, juxtaposing their disordered regions and thereby leading to phase separation. The resulting mRNA-YTHDF complexes then partition into different endogenous phase-separated membraneless compartments, such as P-bodies, stress granules or neuronal RNA granules. The chain is YTH domain-containing family protein 2 from Danio rerio (Zebrafish).